The primary structure comprises 419 residues: UDP-N-acetylglucosamine 1-carboxyvinyltransferase (419 aa).

22 to 23 (KN) is a binding site for phosphoenolpyruvate. Arg-91 provides a ligand contact to UDP-N-acetyl-alpha-D-glucosamine. Cys-115 serves as the catalytic Proton donor. Residue Cys-115 is modified to 2-(S-cysteinyl)pyruvic acid O-phosphothioketal. Residues 120–124 (RPVDL), 160–163 (KVSV), Asp-305, and Val-327 each bind UDP-N-acetyl-alpha-D-glucosamine.

It belongs to the EPSP synthase family. MurA subfamily.

The protein localises to the cytoplasm. It catalyses the reaction phosphoenolpyruvate + UDP-N-acetyl-alpha-D-glucosamine = UDP-N-acetyl-3-O-(1-carboxyvinyl)-alpha-D-glucosamine + phosphate. Its pathway is cell wall biogenesis; peptidoglycan biosynthesis. Its function is as follows. Cell wall formation. Adds enolpyruvyl to UDP-N-acetylglucosamine. The chain is UDP-N-acetylglucosamine 1-carboxyvinyltransferase from Escherichia coli O157:H7.